The chain runs to 292 residues: Homoserine kinase (292 aa).

Residue 84 to 94 (PLARGMGSSSA) participates in ATP binding.

This sequence belongs to the GHMP kinase family. Homoserine kinase subfamily.

It localises to the cytoplasm. The enzyme catalyses L-homoserine + ATP = O-phospho-L-homoserine + ADP + H(+). The protein operates within amino-acid biosynthesis; L-threonine biosynthesis; L-threonine from L-aspartate: step 4/5. In terms of biological role, catalyzes the ATP-dependent phosphorylation of L-homoserine to L-homoserine phosphate. This is Homoserine kinase from Thermus thermophilus (strain ATCC 27634 / DSM 579 / HB8).